The following is a 194-amino-acid chain: 3-isopropylmalate dehydratase small subunit (194 aa).

The protein belongs to the LeuD family. LeuD type 1 subfamily. As to quaternary structure, heterodimer of LeuC and LeuD.

It carries out the reaction (2R,3S)-3-isopropylmalate = (2S)-2-isopropylmalate. It participates in amino-acid biosynthesis; L-leucine biosynthesis; L-leucine from 3-methyl-2-oxobutanoate: step 2/4. Its function is as follows. Catalyzes the isomerization between 2-isopropylmalate and 3-isopropylmalate, via the formation of 2-isopropylmaleate. The chain is 3-isopropylmalate dehydratase small subunit from Leuconostoc mesenteroides subsp. mesenteroides (strain ATCC 8293 / DSM 20343 / BCRC 11652 / CCM 1803 / JCM 6124 / NCDO 523 / NBRC 100496 / NCIMB 8023 / NCTC 12954 / NRRL B-1118 / 37Y).